Here is a 616-residue protein sequence, read N- to C-terminus: tRNA 5-methylaminomethyl-2-thiouridine biosynthesis bifunctional protein MnmC (616 aa).

A tRNA (mnm(5)s(2)U34)-methyltransferase region spans residues 1-232 (MLRTIVPARL…KRHCMSARFA (232 aa)). The segment at 249–616 (IGGGVAGAAA…ARFAGNRKTA (368 aa)) is FAD-dependent cmnm(5)s(2)U34 oxidoreductase.

This sequence in the N-terminal section; belongs to the methyltransferase superfamily. tRNA (mnm(5)s(2)U34)-methyltransferase family. In the C-terminal section; belongs to the DAO family. It depends on FAD as a cofactor.

The protein resides in the cytoplasm. The catalysed reaction is 5-aminomethyl-2-thiouridine(34) in tRNA + S-adenosyl-L-methionine = 5-methylaminomethyl-2-thiouridine(34) in tRNA + S-adenosyl-L-homocysteine + H(+). Functionally, catalyzes the last two steps in the biosynthesis of 5-methylaminomethyl-2-thiouridine (mnm(5)s(2)U) at the wobble position (U34) in tRNA. Catalyzes the FAD-dependent demodification of cmnm(5)s(2)U34 to nm(5)s(2)U34, followed by the transfer of a methyl group from S-adenosyl-L-methionine to nm(5)s(2)U34, to form mnm(5)s(2)U34. This Thiobacillus denitrificans (strain ATCC 25259 / T1) protein is tRNA 5-methylaminomethyl-2-thiouridine biosynthesis bifunctional protein MnmC.